Consider the following 513-residue polypeptide: Na(+)/H(+) antiporter NhaB (513 aa).

12 helical membrane-spanning segments follow: residues 23–43 (LALI…PFVA), 52–72 (IFTL…LLAI), 97–117 (LLLM…LFIF), 120–140 (LLLS…AAAF), 144–164 (FLDA…FYGI), 202–222 (LMMH…VGEP), 238–258 (FFLR…LTCL), 303–323 (AIIG…VGLI), 348–368 (TESL…AVII), 391–411 (LFYI…VGTI), 447–467 (ATPN…APLI), and 475–495 (VWMA…CVEF).

This sequence belongs to the NhaB Na(+)/H(+) (TC 2.A.34) antiporter family.

It is found in the cell inner membrane. It catalyses the reaction 2 Na(+)(in) + 3 H(+)(out) = 2 Na(+)(out) + 3 H(+)(in). Na(+)/H(+) antiporter that extrudes sodium in exchange for external protons. The sequence is that of Na(+)/H(+) antiporter NhaB from Escherichia coli O6:H1 (strain CFT073 / ATCC 700928 / UPEC).